Reading from the N-terminus, the 190-residue chain is ADP-ribosylation factor-like protein 6 (190 aa).

Residue G2 is the site of N-myristoyl glycine attachment. GTP-binding positions include 24-31, 69-73, and 130-133; these read GLDNSGKT, DMAGQ, and NKMD.

Belongs to the small GTPase superfamily. Arf family. In terms of tissue distribution, specifically expressed in ciliated cells.

The protein resides in the cytoplasm. This Caenorhabditis elegans protein is ADP-ribosylation factor-like protein 6.